Reading from the N-terminus, the 151-residue chain is Deoxyuridine 5'-triphosphate nucleotidohydrolase (151 aa).

Substrate is bound by residues 70 to 72 (RSG), Asn83, 87 to 89 (LID), and Met97.

Belongs to the dUTPase family. Homotrimer. Mg(2+) is required as a cofactor.

The catalysed reaction is dUTP + H2O = dUMP + diphosphate + H(+). Its pathway is pyrimidine metabolism; dUMP biosynthesis; dUMP from dCTP (dUTP route): step 2/2. Its function is as follows. This enzyme is involved in nucleotide metabolism: it produces dUMP, the immediate precursor of thymidine nucleotides and it decreases the intracellular concentration of dUTP so that uracil cannot be incorporated into DNA. This is Deoxyuridine 5'-triphosphate nucleotidohydrolase from Escherichia coli (strain K12 / MC4100 / BW2952).